The chain runs to 205 residues: Large ribosomal subunit protein uL4 (205 aa).

The tract at residues 43 to 97 is disordered; that stretch reads GKRQGTSKVKNRSAVRGGGKKPWRQKGTGRARQGSIRAPQWRGGGTVFGPTPRSY. Basic residues predominate over residues 51–71; the sequence is VKNRSAVRGGGKKPWRQKGTG.

Belongs to the universal ribosomal protein uL4 family. Part of the 50S ribosomal subunit.

Its function is as follows. One of the primary rRNA binding proteins, this protein initially binds near the 5'-end of the 23S rRNA. It is important during the early stages of 50S assembly. It makes multiple contacts with different domains of the 23S rRNA in the assembled 50S subunit and ribosome. In terms of biological role, forms part of the polypeptide exit tunnel. This is Large ribosomal subunit protein uL4 from Lactobacillus acidophilus (strain ATCC 700396 / NCK56 / N2 / NCFM).